The sequence spans 341 residues: Ectoine-binding periplasmic protein TeaA (341 aa).

The first 25 residues, 1-25 (MKAYKLLTTASIGALMLGMSTAAYS), serve as a signal peptide directing secretion. Residues Glu34, Arg169, Asn209, Trp213, and Phe234 each contribute to the L-ectoine site.

It belongs to the bacterial solute-binding protein 7 family. Monomer. The complex comprises the extracytoplasmic solute receptor protein TeaA, and the two transmembrane proteins TeaB and TeaC.

The protein resides in the periplasm. In terms of biological role, part of the tripartite ATP-independent periplasmic (TRAP) transport system TeaABC involved in the uptake of ectoine and hydroxyectoine in response to osmotic upshock. Probably functions as a recovery system for synthesized ectoine that leaks out of the cell. Binds ectoine with high affinity. Affinity for hydroxyectoine is approximately 20-fold lower. The sequence is that of Ectoine-binding periplasmic protein TeaA (teaA) from Halomonas elongata (strain ATCC 33173 / DSM 2581 / NBRC 15536 / NCIMB 2198 / 1H9).